The following is a 272-amino-acid chain: 3-methyl-2-oxobutanoate hydroxymethyltransferase (272 aa).

Positions 50 and 89 each coordinate Mg(2+). 3-methyl-2-oxobutanoate-binding positions include 50–51, Asp-89, and Lys-119; that span reads DS. Glu-121 is a Mg(2+) binding site. Glu-188 (proton acceptor) is an active-site residue.

The protein belongs to the PanB family. As to quaternary structure, homodecamer; pentamer of dimers. Requires Mg(2+) as cofactor.

It localises to the cytoplasm. It catalyses the reaction 3-methyl-2-oxobutanoate + (6R)-5,10-methylene-5,6,7,8-tetrahydrofolate + H2O = 2-dehydropantoate + (6S)-5,6,7,8-tetrahydrofolate. Its pathway is cofactor biosynthesis; (R)-pantothenate biosynthesis; (R)-pantoate from 3-methyl-2-oxobutanoate: step 1/2. In terms of biological role, catalyzes the reversible reaction in which hydroxymethyl group from 5,10-methylenetetrahydrofolate is transferred onto alpha-ketoisovalerate to form ketopantoate. The protein is 3-methyl-2-oxobutanoate hydroxymethyltransferase of Methylobacterium radiotolerans (strain ATCC 27329 / DSM 1819 / JCM 2831 / NBRC 15690 / NCIMB 10815 / 0-1).